The chain runs to 177 residues: Translation initiation factor IF-3 (177 aa).

This sequence belongs to the IF-3 family. In terms of assembly, monomer.

The protein localises to the cytoplasm. In terms of biological role, IF-3 binds to the 30S ribosomal subunit and shifts the equilibrium between 70S ribosomes and their 50S and 30S subunits in favor of the free subunits, thus enhancing the availability of 30S subunits on which protein synthesis initiation begins. This Nostoc sp. (strain PCC 7120 / SAG 25.82 / UTEX 2576) protein is Translation initiation factor IF-3.